The sequence spans 316 residues: Ribosomal protein L11 methyltransferase (316 aa).

Positions 159, 179, 201, and 243 each coordinate S-adenosyl-L-methionine.

The protein belongs to the methyltransferase superfamily. PrmA family.

Its subcellular location is the cytoplasm. It catalyses the reaction L-lysyl-[protein] + 3 S-adenosyl-L-methionine = N(6),N(6),N(6)-trimethyl-L-lysyl-[protein] + 3 S-adenosyl-L-homocysteine + 3 H(+). In terms of biological role, methylates ribosomal protein L11. The chain is Ribosomal protein L11 methyltransferase from Gloeobacter violaceus (strain ATCC 29082 / PCC 7421).